Consider the following 547-residue polypeptide: Glucose-6-phosphate isomerase 1 (547 aa).

Catalysis depends on E353, which acts as the Proton donor. Residues H384 and K512 contribute to the active site.

It belongs to the GPI family.

Its subcellular location is the cytoplasm. It carries out the reaction alpha-D-glucose 6-phosphate = beta-D-fructose 6-phosphate. The protein operates within carbohydrate biosynthesis; gluconeogenesis. It functions in the pathway carbohydrate degradation; glycolysis; D-glyceraldehyde 3-phosphate and glycerone phosphate from D-glucose: step 2/4. In terms of biological role, catalyzes the reversible isomerization of glucose-6-phosphate to fructose-6-phosphate. The polypeptide is Glucose-6-phosphate isomerase 1 (Chromobacterium violaceum (strain ATCC 12472 / DSM 30191 / JCM 1249 / CCUG 213 / NBRC 12614 / NCIMB 9131 / NCTC 9757 / MK)).